The primary structure comprises 544 residues: Chaperonin GroEL 3 (544 aa).

ATP is bound by residues 30 to 33 (TLGP), lysine 51, 87 to 91 (DGTTT), glycine 415, and aspartate 496.

It belongs to the chaperonin (HSP60) family. In terms of assembly, forms a cylinder of 14 subunits composed of two heptameric rings stacked back-to-back. Interacts with the co-chaperonin GroES.

It localises to the cytoplasm. It catalyses the reaction ATP + H2O + a folded polypeptide = ADP + phosphate + an unfolded polypeptide.. In terms of biological role, together with its co-chaperonin GroES, plays an essential role in assisting protein folding. The GroEL-GroES system forms a nano-cage that allows encapsulation of the non-native substrate proteins and provides a physical environment optimized to promote and accelerate protein folding. The protein is Chaperonin GroEL 3 of Rhizobium etli (strain ATCC 51251 / DSM 11541 / JCM 21823 / NBRC 15573 / CFN 42).